The following is a 193-amino-acid chain: dCTP deaminase (193 aa).

DCTP-binding positions include 110 to 115 (RSSLAR), D128, 136 to 138 (VLE), Y171, K178, and Q182. Catalysis depends on E138, which acts as the Proton donor/acceptor. The segment at 170-193 (PYNSRQDAKYRGQQGAVASRIDKD) is disordered.

Belongs to the dCTP deaminase family. Homotrimer.

It catalyses the reaction dCTP + H2O + H(+) = dUTP + NH4(+). It functions in the pathway pyrimidine metabolism; dUMP biosynthesis; dUMP from dCTP (dUTP route): step 1/2. In terms of biological role, catalyzes the deamination of dCTP to dUTP. The polypeptide is dCTP deaminase (Yersinia enterocolitica serotype O:8 / biotype 1B (strain NCTC 13174 / 8081)).